The primary structure comprises 683 residues: Transforming growth factor-beta-induced protein ig-h3 (683 aa).

Positions M1–A23 are cleaved as a signal peptide. S37 is subject to Phosphoserine. The EMI domain maps to G45–A99. Intrachain disulfides connect C49/C85, C74/C339, C84/C97, C214/C317, and C473/C478. S-cysteinyl cysteine is present on C65. FAS1 domains follow at residues L103–I236, T240–L371, S375–L498, and M502–L632. Positions R642–D644 match the Cell attachment site motif.

Binds to type I, II, and IV collagens. In terms of processing, gamma-carboxylation is controversial. Gamma-carboxyglutamated; gamma-carboxyglutamate residues are formed by vitamin K dependent carboxylation; this may be required for calcium binding. According to a more recent report, does not contain vitamin K-dependent gamma-carboxyglutamate residues. The EMI domain contains 2 expected intradomain disulfide bridges (Cys-49-Cys85 and Cys-84-Cys-97) and one unusual interdomain disulfide bridge to the second FAS1 domain (Cys-74-Cys-339). This arrangement violates the predicted disulfide bridge pattern of an EMI domain. Expressed in heart, kidney, liver, skeletal muscle, testis, thyroid and uterus.

Its subcellular location is the secreted. It is found in the extracellular space. The protein localises to the extracellular matrix. In terms of biological role, plays a role in cell adhesion. May play a role in cell-collagen interactions. This chain is Transforming growth factor-beta-induced protein ig-h3 (Tgfbi), found in Mus musculus (Mouse).